The primary structure comprises 468 residues: Tumor necrosis factor receptor superfamily member 10A (468 aa).

Residues 1-23 (MAPPPARVHLGAFLAVTPNPGSA) form the signal peptide. The disordered stretch occupies residues 17–82 (TPNPGSAASG…APGPRPAREA (66 aa)). Residues 20–34 (PGSAASGTEAAAATP) are compositionally biased toward low complexity. Topologically, residues 24–239 (ASGTEAAAAT…VHKESGNGHN (216 aa)) are extracellular. Position 52 is an omega-N-methylarginine (arginine 52). Residues 63 to 74 (GPSARARAGRAP) are compositionally biased toward low complexity. TNFR-Cys repeat units follow at residues 107–145 (SAAT…PGAC), 147–188 (RCTE…NTAC), and 189–229 (QCKP…DIEC). Disulfide bonds link cysteine 132-cysteine 145, cysteine 148-cysteine 164, cysteine 167-cysteine 180, cysteine 170-cysteine 188, cysteine 190-cysteine 204, cysteine 207-cysteine 221, and cysteine 211-cysteine 229. Asparagine 156 carries N-linked (GlcNAc...) asparagine glycosylation. A helical membrane pass occupies residues 240–262 (IWVILVVTLVVPLLLVAVLIVCC). The Cytoplasmic portion of the chain corresponds to 263-468 (CIGSGCGGDP…DGTGSAVSLE (206 aa)). Residues 365 to 448 (MLFFDKFANI…HAREKIQDLL (84 aa)) enclose the Death domain. Phosphoserine is present on residues serine 424, serine 463, and serine 466.

As to quaternary structure, monomer. Homooligomers and heterooligomers with TNFRSF10B. Three TNFRSF10A molecules interact with the TNFSF10 homotrimer. Can interact with TRADD and RIPK1. Interacts with ARAP1. In the absence of stimulation, interacts with BIRC2, DDX3X and GSK3B. The interaction with BIRC2 and DDX3X is further enhanced upon receptor stimulation and accompanied by DDX3X and BIRC2 cleavage. Interacts with ZDHHC3. Interacts with PTPN6; this interaction enables the inhibition of T-cell receptor signaling via LCK. In terms of assembly, (Microbial infection) Interacts with HCMV protein UL141; this interaction prevents TNFRSF10A cell surface expression. Post-translationally, palmitoylated. Palmitoylation of TNFRSF10A is required for its association with lipid rafts, oligomerization and function in TRAIL-induced cell death. Palmitoylated by ZDHHC3. In terms of tissue distribution, widely expressed. High levels are found in spleen, peripheral blood leukocytes, small intestine and thymus, but also in K-562 erythroleukemia cells, MCF-7 breast carcinoma cells and activated T-cells.

It is found in the cell membrane. It localises to the membrane raft. The protein resides in the cytoplasm. The protein localises to the cytosol. In terms of biological role, receptor for the cytotoxic ligand TNFSF10/TRAIL. The adapter molecule FADD recruits caspase-8 to the activated receptor. The resulting death-inducing signaling complex (DISC) performs caspase-8 proteolytic activation which initiates the subsequent cascade of caspases (aspartate-specific cysteine proteases) mediating apoptosis. Promotes the activation of NF-kappa-B. The polypeptide is Tumor necrosis factor receptor superfamily member 10A (TNFRSF10A) (Homo sapiens (Human)).